A 193-amino-acid chain; its full sequence is uncharacterized protein (193 aa).

4 consecutive transmembrane segments (helical) span residues 8–28 (GVLVGGLWAWIAPPIHAVVAI), 46–66 (FFIAPFMLLGLLSVLAVVASA), 82–102 (GLSIGLTTAAAIAAGVGALVV), and 141–161 (IALTLMWPAGIASLVYALLAA).

This sequence to M.leprae ML1222.

It is found in the cell membrane. This is an uncharacterized protein from Mycobacterium tuberculosis (strain CDC 1551 / Oshkosh).